The sequence spans 342 residues: MSERDSFLHLARPLGPAPVGAQPSTAPLNVAIQPQAVFSILDHSLRRPADQERVIGTLLGTRSEDGTEIEIRNCYAVPHTETAEQVEVDMDYQKQMLALHLRANPREVLVGWYATSSDLNTFSALIQNFYSQQGDGTWPHPAVHLTVSTVPGQDIESRTYISAPIGVTAERAADSCLFIPVPHEIKYGEAEKSGLELISSAKDREDRSQEIMTDLDSLERAVQHVLDMLERVSNYVNNVLDEEAEPSSALGQFLMNALSLAPKVDPADIERDFNNHIQDVLVVSYLANTIRTQIDLSNRLATAALTMGGTDALAGDGQKDGGDRKQGGDRRNKGRQQRTQEA.

Residues Val-30–Gly-166 form the MPN domain. The segment at Thr-310 to Ala-342 is disordered. The span at Gly-317–Arg-331 shows a compositional bias: basic and acidic residues.

The protein belongs to the eIF-3 subunit F family. In terms of assembly, component of the eukaryotic translation initiation factor 3 (eIF-3) complex.

The protein localises to the cytoplasm. In terms of biological role, component of the eukaryotic translation initiation factor 3 (eIF-3) complex, which is involved in protein synthesis of a specialized repertoire of mRNAs and, together with other initiation factors, stimulates binding of mRNA and methionyl-tRNAi to the 40S ribosome. The eIF-3 complex specifically targets and initiates translation of a subset of mRNAs involved in cell proliferation. The protein is Eukaryotic translation initiation factor 3 subunit F of Phaeosphaeria nodorum (strain SN15 / ATCC MYA-4574 / FGSC 10173) (Glume blotch fungus).